A 307-amino-acid chain; its full sequence is Protoheme IX farnesyltransferase (307 aa).

9 helical membrane passes run 28-48 (VTQL…PGMV), 50-70 (WPVL…AFAI), 100-120 (ILLF…VFAN), 122-142 (LTMW…TLLL), 149-169 (NIVI…AAVA), 176-196 (AWIL…ALAL), 218-238 (FTLL…ILPF), 243-263 (SGYL…VHAW), and 282-302 (IVYL…KFGP).

This sequence belongs to the UbiA prenyltransferase family. Protoheme IX farnesyltransferase subfamily.

The protein resides in the cell inner membrane. It catalyses the reaction heme b + (2E,6E)-farnesyl diphosphate + H2O = Fe(II)-heme o + diphosphate. The protein operates within porphyrin-containing compound metabolism; heme O biosynthesis; heme O from protoheme: step 1/1. Its function is as follows. Converts heme B (protoheme IX) to heme O by substitution of the vinyl group on carbon 2 of heme B porphyrin ring with a hydroxyethyl farnesyl side group. In Ralstonia nicotianae (strain ATCC BAA-1114 / GMI1000) (Ralstonia solanacearum), this protein is Protoheme IX farnesyltransferase.